The following is a 655-amino-acid chain: Protein-glucosylgalactosylhydroxylysine glucosidase (655 aa).

Substrate is bound at residue 258–259; the sequence is WD. Glu-388 serves as the catalytic Proton donor. Residue 456–457 participates in substrate binding; the sequence is KQ.

This sequence belongs to the glycosyl hydrolase 65 family.

It catalyses the reaction (5R)-5-O-[alpha-D-glucosyl-(1-&gt;2)-beta-D-galactosyl]-5-hydroxy-L-lysyl-[collagen] + H2O = (5R)-5-O-(beta-D-galactosyl)-5-hydroxy-L-lysyl-[collagen] + D-glucose. Functionally, catalyzes the hydrolysis of glucose from the disaccharide unit linked to hydroxylysine residues of collagen and collagen-like proteins. This chain is Protein-glucosylgalactosylhydroxylysine glucosidase, found in Danio rerio (Zebrafish).